The sequence spans 1185 residues: Chromosome partition protein Smc (1185 aa).

32–39 (PNGSGKSN) is a binding site for ATP. A coiled-coil region spans residues 167-494 (ISKYKSRKMD…KLNEKNSHLS (328 aa)). The SMC hinge domain maps to 521-639 (TGIIGVVADQ…TDLKSAIEIA (119 aa)). The stretch at 677–1031 (RSRKIEDLKK…KVIQEIEETM (355 aa)) forms a coiled coil.

This sequence belongs to the SMC family. As to quaternary structure, homodimer.

The protein resides in the cytoplasm. Its function is as follows. Required for chromosome condensation and partitioning. This chain is Chromosome partition protein Smc, found in Halothermothrix orenii (strain H 168 / OCM 544 / DSM 9562).